The primary structure comprises 407 residues: 1-deoxy-D-xylulose 5-phosphate reductoisomerase (407 aa).

Residues threonine 25, glycine 26, serine 27, isoleucine 28, asparagine 53, and asparagine 136 each contribute to the NADPH site. Lysine 137 lines the 1-deoxy-D-xylulose 5-phosphate pocket. Glutamate 138 is a binding site for NADPH. Aspartate 162 is a binding site for Mn(2+). Serine 163, glutamate 164, serine 188, and histidine 211 together coordinate 1-deoxy-D-xylulose 5-phosphate. Glutamate 164 is a binding site for Mn(2+). Glycine 217 lines the NADPH pocket. Residues serine 224, asparagine 229, lysine 230, and glutamate 233 each coordinate 1-deoxy-D-xylulose 5-phosphate. Glutamate 233 provides a ligand contact to Mn(2+).

Belongs to the DXR family. Mg(2+) serves as cofactor. Mn(2+) is required as a cofactor.

It catalyses the reaction 2-C-methyl-D-erythritol 4-phosphate + NADP(+) = 1-deoxy-D-xylulose 5-phosphate + NADPH + H(+). Its pathway is isoprenoid biosynthesis; isopentenyl diphosphate biosynthesis via DXP pathway; isopentenyl diphosphate from 1-deoxy-D-xylulose 5-phosphate: step 1/6. Functionally, catalyzes the NADPH-dependent rearrangement and reduction of 1-deoxy-D-xylulose-5-phosphate (DXP) to 2-C-methyl-D-erythritol 4-phosphate (MEP). In Bradyrhizobium diazoefficiens (strain JCM 10833 / BCRC 13528 / IAM 13628 / NBRC 14792 / USDA 110), this protein is 1-deoxy-D-xylulose 5-phosphate reductoisomerase.